The chain runs to 243 residues: Leucyl/phenylalanyl-tRNA--protein transferase (243 aa).

The protein belongs to the L/F-transferase family.

It localises to the cytoplasm. The enzyme catalyses N-terminal L-lysyl-[protein] + L-leucyl-tRNA(Leu) = N-terminal L-leucyl-L-lysyl-[protein] + tRNA(Leu) + H(+). The catalysed reaction is N-terminal L-arginyl-[protein] + L-leucyl-tRNA(Leu) = N-terminal L-leucyl-L-arginyl-[protein] + tRNA(Leu) + H(+). It catalyses the reaction L-phenylalanyl-tRNA(Phe) + an N-terminal L-alpha-aminoacyl-[protein] = an N-terminal L-phenylalanyl-L-alpha-aminoacyl-[protein] + tRNA(Phe). Its function is as follows. Functions in the N-end rule pathway of protein degradation where it conjugates Leu, Phe and, less efficiently, Met from aminoacyl-tRNAs to the N-termini of proteins containing an N-terminal arginine or lysine. The chain is Leucyl/phenylalanyl-tRNA--protein transferase from Vibrio cholerae serotype O1 (strain ATCC 39541 / Classical Ogawa 395 / O395).